We begin with the raw amino-acid sequence, 339 residues long: MEVVSKIDQENQAKIWKQIFGFAESLVLKCAVQLEIAETLHNNVKPMSLSELASKLPAQPVNEDRLYRILHFLVHMKLFNKDATTQKYSLAPPAKYLLKGWEKSMVPSILSVTDKDFTAPWNHLGDGLTGNCNAFEKALGKGIRVYMRENPEKDQLFNEGMACDTRLFASALVNECKSIFSDGINTLAGVGRGTGTAVKAISKAFPDIKCTIHDLPEITSKNSKISRDVFKSVPSADAIFMKSILHEWNDEECIQILKRCKEAIPKGGKVIIADVVIDMDSTHPYSKSRLAMDLAMMLHTGGKERTEEDWKKLIDAAGFASCKITKLSALQSVIEAYPH.

An S-adenosyl-L-methionine-binding site is contributed by Met-161. Asp-164 provides a ligand contact to substrate. S-adenosyl-L-methionine contacts are provided by residues Thr-165, Gly-191, Asp-214, 228-229, and Lys-242; that span reads DV. 243 to 247 lines the substrate pocket; sequence SILHE. His-246 acts as the Proton acceptor in catalysis.

Belongs to the class I-like SAM-binding methyltransferase superfamily. Cation-independent O-methyltransferase family. COMT subfamily.

It carries out the reaction (S)-scoulerine + S-adenosyl-L-methionine = (S)-tetrahydrocolumbamine + S-adenosyl-L-homocysteine + H(+). Its pathway is alkaloid biosynthesis. Its function is as follows. Methyltransferase involved in the biosynthesis of the benzylisoquinoline alkaloid noscapine. Catalyzes the conversion of (S)-scoulerine to (S)-tetrahydrocolumbamine. This chain is Probable scoulerine-9-O-methyltransferase OMT3B, found in Papaver somniferum (Opium poppy).